Here is a 600-residue protein sequence, read N- to C-terminus: MKLGFYLLGGDFMRLAIIDYDRCQPKKCSMECMKYCPGVRMGEKTIEIDENTGKPVISEVLCSGCGICVKRCPFKAISIIGLPEELSEDKIVHSYGQNRFKLFGLVIPRDGVVGIIGQNGIGKSTVLRILAGELIPNLGKHDKEPNYDDVIKYFRGTELQEYFEKLKNKGVKAIHKVQYVDILPKVVKGKVGDLLKKVDEKGKFDEVVEKLELKNILDRELSQLSGGELQRVAIAAAYLRNGDIYFFDEPSSWLDIRQRFNAARLIRELNKVVVVEHDLIVLDYLSDYIHIMYGVPSAYGIVSMPKSVRVGINEYLYGELREENIRFRKEPIIFEKRAVIDFKNRPILLSYSSMKKTLGDFKLEVSGGTIYKGEVIGILGPNGIGKTTFVKLLAGVIKPDEGEVIKEGDIKVSYKPQYITPDYDGTVEDLLSSITNIHTSYYKSEIINPLQLEKLLDREVRELSGGELQRVAIAACLSRDADIYLLDEPSAFLDVEQRLRVSKVIRRIADEKEAGMFVVDHDILFQDYISDRFIVFSGEPGKFGVGSSPMNKRDGANKFLKEMQITFRRDPETGRPRANKEGSQRDIMQKEKGEYYYVDE.

4Fe-4S ferredoxin-type domains are found at residues 14–44 (RLAIIDYDRCQPKKCSMECMKYCPGVRMGEK) and 53–82 (GKPVISEVLCSGCGICVKRCPFKAISIIGL). ABC transporter domains follow at residues 77–318 (ISII…YLYG) and 348–563 (LLSY…LKEM). Residues 117-124 (GQNGIGKS) and 380-387 (GPNGIGKT) each bind ATP. Positions 569 to 594 (RDPETGRPRANKEGSQRDIMQKEKGE) are enriched in basic and acidic residues. The disordered stretch occupies residues 569 to 600 (RDPETGRPRANKEGSQRDIMQKEKGEYYYVDE).

Belongs to the ABC transporter superfamily.

This is an uncharacterized protein from Methanocaldococcus jannaschii (strain ATCC 43067 / DSM 2661 / JAL-1 / JCM 10045 / NBRC 100440) (Methanococcus jannaschii).